Here is a 549-residue protein sequence, read N- to C-terminus: Teichoic acids export ATP-binding protein TagH (549 aa).

Residues 22 to 243 enclose the ABC transporter domain; it reads DKLKDLFRKQ…YRAFLKEYNQ (222 aa). Position 57 to 64 (57 to 64) interacts with ATP; that stretch reads GLNGSGKS. The tract at residues 244–549 is unknown; the sequence is MSMEDRKKFQ…EIQSISIVKK (306 aa). The 70-residue stretch at 346-415 folds into the SH3b domain; it reads ENMYMVKSNG…VSTKFIEPFK (70 aa).

This sequence belongs to the ABC transporter superfamily. Teichoic acids exporter (TC 3.A.1.104.1) family. In terms of assembly, the complex is composed of two ATP-binding proteins (TagH) and two transmembrane proteins (TagG).

The protein resides in the cell membrane. It catalyses the reaction ATP + H2O + teichoic acidSide 1 = ADP + phosphate + teichoic acidSide 2.. In terms of biological role, part of the ABC transporter complex TagGH involved in teichoic acids export. Responsible for energy coupling to the transport system. This is Teichoic acids export ATP-binding protein TagH from Bacillus cereus (strain ZK / E33L).